The sequence spans 218 residues: MAMEVKICGLRHPAQAQAIAALGFTTLGFICVEASSRYVSSREIELVLQSLTAHNKRSAIGVFANVSLPKLGEFLAQTSLNGIQLHGDESPDFCRQVKQAFPQHRLIKALRLRRSADLERAEAYYNAVDVLLLDAYHPEQLGGTGQTLPWQKLQQFRPPLPWWLAGGLTPSNVQEALNLLQPDGIDLSSGVEQGPADKDVAKVAQLRAQLDALAILQH.

Belongs to the TrpF family.

It catalyses the reaction N-(5-phospho-beta-D-ribosyl)anthranilate = 1-(2-carboxyphenylamino)-1-deoxy-D-ribulose 5-phosphate. Its pathway is amino-acid biosynthesis; L-tryptophan biosynthesis; L-tryptophan from chorismate: step 3/5. This Synechocystis sp. (strain ATCC 27184 / PCC 6803 / Kazusa) protein is N-(5'-phosphoribosyl)anthranilate isomerase (trpF).